The chain runs to 600 residues: Gamma-terpinene synthase, chloroplastic (600 aa).

Residues 1 to 40 (MALNLLSSLPAACNFTRLSLPLSSKVNGFVPPITQVQYPM) constitute a chloroplast transit peptide. The Mg(2+) site is built by Asp-353, Asp-357, Asp-498, and Glu-506. A DDXXD motif motif is present at residues 353-357 (DDVYD).

This sequence belongs to the terpene synthase family. Requires Mn(2+) as cofactor. The cofactor is Mg(2+).

It localises to the plastid. The protein localises to the chloroplast. The enzyme catalyses (2E)-geranyl diphosphate = gamma-terpinene + diphosphate. Its pathway is secondary metabolite biosynthesis; terpenoid biosynthesis. With respect to regulation, inhibited by 100 mM KCl. In terms of biological role, monoterpene synthase which catalyzes the conversion of geranyl diphosphate to gamma-terpinene and the minor products limonene, alpha-pinene, beta-pinene, alpha-terpinolene, alpha-thujene, alpha-terpinene, myrcene and sabinene. The polypeptide is Gamma-terpinene synthase, chloroplastic (Citrus limon (Lemon)).